The chain runs to 343 residues: N-acetyl-gamma-glutamyl-phosphate reductase (343 aa).

The active site involves Cys147.

The protein belongs to the NAGSA dehydrogenase family. Type 1 subfamily.

The protein localises to the cytoplasm. It carries out the reaction N-acetyl-L-glutamate 5-semialdehyde + phosphate + NADP(+) = N-acetyl-L-glutamyl 5-phosphate + NADPH + H(+). It participates in amino-acid biosynthesis; L-arginine biosynthesis; N(2)-acetyl-L-ornithine from L-glutamate: step 3/4. Catalyzes the NADPH-dependent reduction of N-acetyl-5-glutamyl phosphate to yield N-acetyl-L-glutamate 5-semialdehyde. The protein is N-acetyl-gamma-glutamyl-phosphate reductase of Listeria innocua serovar 6a (strain ATCC BAA-680 / CLIP 11262).